Here is a 600-residue protein sequence, read N- to C-terminus: NADH-quinone oxidoreductase subunit C/D (600 aa).

The segment at 1 to 190 (MIDLMPKKNT…EPFFLNEQKE (190 aa)) is NADH dehydrogenase I subunit C. Residues 214 to 600 (EFMFLNLGPN…IDFVMSDVDR (387 aa)) are NADH dehydrogenase I subunit D.

The protein in the N-terminal section; belongs to the complex I 30 kDa subunit family. In the C-terminal section; belongs to the complex I 49 kDa subunit family. In terms of assembly, NDH-1 is composed of 13 different subunits. Subunits NuoB, CD, E, F, and G constitute the peripheral sector of the complex.

The protein resides in the cell membrane. It catalyses the reaction a quinone + NADH + 5 H(+)(in) = a quinol + NAD(+) + 4 H(+)(out). NDH-1 shuttles electrons from NADH, via FMN and iron-sulfur (Fe-S) centers, to quinones in the respiratory chain. The immediate electron acceptor for the enzyme in this species is believed to be ubiquinone. Couples the redox reaction to proton translocation (for every two electrons transferred, four hydrogen ions are translocated across the cytoplasmic membrane), and thus conserves the redox energy in a proton gradient. The sequence is that of NADH-quinone oxidoreductase subunit C/D from Buchnera aphidicola subsp. Acyrthosiphon pisum (strain 5A).